The sequence spans 186 residues: Threonylcarbamoyl-AMP synthase (186 aa).

The YrdC-like domain maps to 3-186; sequence ILSLSECVDR…IINGSLIRHG (184 aa).

The protein belongs to the SUA5 family. TsaC subfamily.

Its subcellular location is the cytoplasm. The enzyme catalyses L-threonine + hydrogencarbonate + ATP = L-threonylcarbamoyladenylate + diphosphate + H2O. In terms of biological role, required for the formation of a threonylcarbamoyl group on adenosine at position 37 (t(6)A37) in tRNAs that read codons beginning with adenine. Catalyzes the conversion of L-threonine, HCO(3)(-)/CO(2) and ATP to give threonylcarbamoyl-AMP (TC-AMP) as the acyladenylate intermediate, with the release of diphosphate. This Buchnera aphidicola subsp. Baizongia pistaciae (strain Bp) protein is Threonylcarbamoyl-AMP synthase.